Reading from the N-terminus, the 465-residue chain is Sorting nexin-8 (465 aa).

A compositionally biased stretch (low complexity) spans 1-19; that stretch reads MTGRAMDPLPAAAVGAAAE. The tract at residues 1 to 36 is disordered; the sequence is MTGRAMDPLPAAAVGAAAEAEADEEADPPASDLPTP. The PX domain maps to 73–181; it reads ARDTVQVELI…KLFLSFSGSD (109 aa). Positions 109, 135, and 148 each coordinate a 1,2-diacyl-sn-glycero-3-phospho-(1D-myo-inositol-3-phosphate). Thr-452 carries the phosphothreonine modification. The residue at position 456 (Ser-456) is a Phosphoserine.

The protein belongs to the sorting nexin family.

It localises to the early endosome membrane. Its function is as follows. May be involved in several stages of intracellular trafficking. May play a role in intracellular protein transport from early endosomes to the trans-Golgi network. This is Sorting nexin-8 (SNX8) from Homo sapiens (Human).